Here is a 518-residue protein sequence, read N- to C-terminus: Chaperonin GroEL (518 aa).

ATP-binding positions include 30–33, Lys51, 87–91, and Gly415; these read TLGP and DGTTT.

It belongs to the chaperonin (HSP60) family. In terms of assembly, forms a cylinder of 14 subunits composed of two heptameric rings stacked back-to-back. Interacts with the co-chaperonin GroES.

It is found in the cytoplasm. The enzyme catalyses ATP + H2O + a folded polypeptide = ADP + phosphate + an unfolded polypeptide.. Together with its co-chaperonin GroES, plays an essential role in assisting protein folding. The GroEL-GroES system forms a nano-cage that allows encapsulation of the non-native substrate proteins and provides a physical environment optimized to promote and accelerate protein folding. The polypeptide is Chaperonin GroEL (Desulfotalea psychrophila (strain LSv54 / DSM 12343)).